A 514-amino-acid polypeptide reads, in one-letter code: Na(+)/H(+) antiporter NhaB (514 aa).

11 consecutive transmembrane segments (helical) span residues 13 to 33 (FMGN…IINP), 34 to 54 (LIFF…EFIF), 96 to 116 (VILL…LLLF), 136 to 156 (CFAS…AVVI), 203 to 223 (LMMH…VGEP), 236 to 256 (FVTF…AGLA), 304 to 324 (ALIG…VGII), 349 to 369 (EEAL…AVII), 392 to 412 (LFYL…VGTV), 448 to 468 (ATPN…SPLI), and 479 to 499 (ALPY…FWLV).

This sequence belongs to the NhaB Na(+)/H(+) (TC 2.A.34) antiporter family.

Its subcellular location is the cell inner membrane. It carries out the reaction 2 Na(+)(in) + 3 H(+)(out) = 2 Na(+)(out) + 3 H(+)(in). In terms of biological role, na(+)/H(+) antiporter that extrudes sodium in exchange for external protons. The sequence is that of Na(+)/H(+) antiporter NhaB from Proteus mirabilis (strain HI4320).